A 499-amino-acid chain; its full sequence is Endoglucanase (499 aa).

An N-terminal signal peptide occupies residues 1 to 29; that stretch reads MKRSISIFITCLLIAVLTMGGLLPSPASA. Substrate is bound by residues His65, 69-70, Tyr96, and His131; that span reads WY. Catalysis depends on Glu169, which acts as the Proton donor. Tyr231 provides a ligand contact to substrate. The Nucleophile role is filled by Glu257. Residues 263–264, Trp291, and 296–298 each bind substrate; these read AS and KQE. The segment covering 330–340 has biased composition (basic and acidic residues); the sequence is RGTKDSTKDVP. Residues 330-353 are disordered; the sequence is RGTKDSTKDVPETPAQDNPTQEKG. Positions 350–499 constitute a CBM3 domain; that stretch reads QEKGVSVQYK…GKLIWGTEPN (150 aa).

This sequence belongs to the glycosyl hydrolase 5 (cellulase A) family.

It carries out the reaction Endohydrolysis of (1-&gt;4)-beta-D-glucosidic linkages in cellulose, lichenin and cereal beta-D-glucans.. In Bacillus subtilis, this protein is Endoglucanase (bglC).